A 379-amino-acid polypeptide reads, in one-letter code: Elongation factor Ts, mitochondrial (379 aa).

Residues 1-45 (MALYRTARRPLQMMLFSRLGNPEQNYSSWARKDASQSAFGMFVRL) constitute a mitochondrion transit peptide.

Belongs to the EF-Ts family.

It is found in the mitochondrion. Associates with the EF-Tu.GDP complex and induces the exchange of GDP to GTP. It remains bound to the aminoacyl-tRNA.EF-Tu.GTP complex up to the GTP hydrolysis stage on the ribosome. This is Elongation factor Ts, mitochondrial from Ricinus communis (Castor bean).